A 230-amino-acid chain; its full sequence is Large ribosomal subunit protein uL1 (230 aa).

Belongs to the universal ribosomal protein uL1 family. Part of the 50S ribosomal subunit.

Functionally, binds directly to 23S rRNA. The L1 stalk is quite mobile in the ribosome, and is involved in E site tRNA release. Protein L1 is also a translational repressor protein, it controls the translation of the L11 operon by binding to its mRNA. In Lactobacillus gasseri (strain ATCC 33323 / DSM 20243 / BCRC 14619 / CIP 102991 / JCM 1131 / KCTC 3163 / NCIMB 11718 / NCTC 13722 / AM63), this protein is Large ribosomal subunit protein uL1.